Consider the following 154-residue polypeptide: Superoxide dismutase [Cu-Zn] (154 aa).

Residues H47, H49, and H64 each coordinate Cu cation. Cysteines 58 and 147 form a disulfide. 4 residues coordinate Zn(2+): H64, H72, H81, and D84. Residue H121 coordinates Cu cation. Residues 124 to 137 are compositionally biased toward basic and acidic residues; it reads TDDLGKGENEESKK. The disordered stretch occupies residues 124 to 144; that stretch reads TDDLGKGENEESKKTGNAGTR. Residue R144 participates in substrate binding.

The protein belongs to the Cu-Zn superoxide dismutase family. Homodimer. Requires Cu cation as cofactor. Zn(2+) is required as a cofactor.

It localises to the cytoplasm. The enzyme catalyses 2 superoxide + 2 H(+) = H2O2 + O2. In terms of biological role, destroys radicals which are normally produced within the cells and which are toxic to biological systems. The protein is Superoxide dismutase [Cu-Zn] (sod1) of Botryotinia fuckeliana (Noble rot fungus).